We begin with the raw amino-acid sequence, 947 residues long: MLEKTYDSASVEPKIAKAWDEANAFRAGANAKPGAETFTIVIPPPNVTGSLHMGHALNNTLQDILVRFERMRGKDVLWQPGMDHAGIATQMVVERKLMENQLPGRREMGREAFVEKVWEWKAESGGLIFNQLKRLGASCDWSRERFTMDEGLSEAVLEVFVTLYKQNLIYKAKRLVNWDPKLQTAISDMEVEQIEVKGNLWHFRYPLEKGVTYEYPVAFDADGTPTEFETRDYIVVATTRPETMLGDTGVAVNPEDERYKGIVGKHVILPIVGRKIPIVADDYADPTAGTGAVKITPAHDFNDFEVGKRCGLRAINVMNIDGTISIKENEDFLEGLSHPAALHGAWDRLEGQDRFTARKIIVEIFEEAGLLDKIEPHKHVVPHGDRGGVPIEPRLTDQWWVDNKTLAQPAIASVREGRTNFVPKNWENTYFQWMENIQPWCISRQLWWGHQIPAWYGPDGQVFVEKTEEEALQAAIQHYIAHEGPWKAWVEEKLENFAPGEILTRDEDVLDTWFSSALWPFSTLGWPEQTPELARYYPTNVLVTGFDIIPFWVVRMMQMGLHFMKDDAGNPVEPFSTVYIHALVRDKNGQKMSKSKGNVIDPLELIDEYGADALRFTLAIMAAQGRDVKLDPARIAGYRNFGTKLWNATRFAEMNGVKRDPHFLAETASLTINRWILTELANTARDVTAALENFRFNDASGILYRFVWNQFCDWYLELLKPVFSGEDEEAKRESQACAAYVLEEIYKLLHPFMPFMTEELWAHTAGEGEERDDLLCLTDWPEPEFRDDAAAAEINWLIDLVSGIRSARAEMNVPPGATASLVVVGANTSTEARLDRHAAAIRRLARADEIRGGDVAPKGSAQIIVGEATVCLPLGNLVDLAAEQARLEKAIGKVDAEMERIDKKLSNEKFVANADPEVVAAERERKAELDVQLASLRTALTRVSEAG.

The 'HIGH' region signature appears at 45-55 (PNVTGSLHMGH). The 'KMSKS' region signature appears at 591 to 595 (KMSKS). Lys594 contributes to the ATP binding site. Residues 879-943 (DLAAEQARLE…ASLRTALTRV (65 aa)) adopt a coiled-coil conformation.

The protein belongs to the class-I aminoacyl-tRNA synthetase family. ValS type 1 subfamily. As to quaternary structure, monomer.

It localises to the cytoplasm. It carries out the reaction tRNA(Val) + L-valine + ATP = L-valyl-tRNA(Val) + AMP + diphosphate. Functionally, catalyzes the attachment of valine to tRNA(Val). As ValRS can inadvertently accommodate and process structurally similar amino acids such as threonine, to avoid such errors, it has a 'posttransfer' editing activity that hydrolyzes mischarged Thr-tRNA(Val) in a tRNA-dependent manner. This is Valine--tRNA ligase from Agrobacterium fabrum (strain C58 / ATCC 33970) (Agrobacterium tumefaciens (strain C58)).